We begin with the raw amino-acid sequence, 159 residues long: Ribosomal RNA large subunit methyltransferase H (159 aa).

S-adenosyl-L-methionine contacts are provided by residues G108 and F127–F132.

Belongs to the RNA methyltransferase RlmH family. As to quaternary structure, homodimer.

The protein localises to the cytoplasm. It catalyses the reaction pseudouridine(1915) in 23S rRNA + S-adenosyl-L-methionine = N(3)-methylpseudouridine(1915) in 23S rRNA + S-adenosyl-L-homocysteine + H(+). Functionally, specifically methylates the pseudouridine at position 1915 (m3Psi1915) in 23S rRNA. This Clostridium acetobutylicum (strain ATCC 824 / DSM 792 / JCM 1419 / IAM 19013 / LMG 5710 / NBRC 13948 / NRRL B-527 / VKM B-1787 / 2291 / W) protein is Ribosomal RNA large subunit methyltransferase H.